Here is a 571-residue protein sequence, read N- to C-terminus: MGSTLGCHRSIPRDPSDLSHSRKFSAACNFSNILVNQERLNINTATEEELMTLPGVTRAVARSIVEYREYIGGFKKVEDLALVSGVGATKLEQVKFEICVSSKGSSAQHSPSSLRRDLMAEQQPHHLATAAAVPLTPRVNINTATPAQLMSVRGLTEKMAVSIVDYRREHGPFRSVEDLVRMGGINAAFLDRIRHQVFAERSRPPSTHTNGGLTFTAKPHPSPTSLSLQSEDLDLPPGGPTQIISTRPSVEAFGGTRDGRPVLRLATWNLQGCSVEKANNPGVREVVCMTLLENSIKLLAVQELLDREALEKFCVELNQPILPNIRKWKGPRGCWKAVVSETPSTQLQKGAGFAGFLWDTAAGVELRDAAWQESSPGNGHGKPVGPSPYLARFKVGSHDLTLVNLHLATLTLPGGENLSKNHSDSHRWASFTQTLQETLKGEKDVIVLGDFGQGPDSSDYDILRKEKFHHLIPAHTFTNISTKNPQGSKALDNIWISKSLKKVFTGHWAVVREGLTNPWIPDNWSWGGVASEHCPVLAEFYTEKDWTRKEGPRSGNGLTLERSEANIKHER.

Residues 1–20 are disordered; the sequence is MGSTLGCHRSIPRDPSDLSH. Glycine 2 carries the N-myristoyl glycine lipid modification. Over residues 11 to 20 the composition is skewed to basic and acidic residues; the sequence is IPRDPSDLSH. Serine 16, serine 21, and serine 25 each carry phosphoserine. The 30-residue stretch at 38–67 folds into the HhH domain; that stretch reads ERLNINTATEEELMTLPGVTRAVARSIVEY. Residues serine 106, serine 110, serine 162, and serine 175 each carry the phosphoserine modification. The disordered stretch occupies residues 202–227; it reads SRPPSTHTNGGLTFTAKPHPSPTSLS. Residues 204–213 show a composition bias toward polar residues; the sequence is PPSTHTNGGL. Threonine 267 is modified (phosphothreonine). Serine 430 carries the post-translational modification Phosphoserine. The segment at 548–571 is disordered; sequence RKEGPRSGNGLTLERSEANIKHER. Residues 561-571 are compositionally biased toward basic and acidic residues; it reads ERSEANIKHER.

The chain is Endonuclease/exonuclease/phosphatase family domain-containing protein 1 (EEPD1) from Bos taurus (Bovine).